Reading from the N-terminus, the 600-residue chain is Glutamine--fructose-6-phosphate aminotransferase [isomerizing] (600 aa).

C2 serves as the catalytic Nucleophile; for GATase activity. Positions 2 to 217 (CGIVGFIGEQ…DKEIVIVMKE (216 aa)) constitute a Glutamine amidotransferase type-2 domain. SIS domains are found at residues 283-422 (IRNA…AKGE) and 452-590 (LAKQ…VDKP). The For Fru-6P isomerization activity role is filled by K595.

In terms of assembly, homodimer.

The protein resides in the cytoplasm. The catalysed reaction is D-fructose 6-phosphate + L-glutamine = D-glucosamine 6-phosphate + L-glutamate. Catalyzes the first step in hexosamine metabolism, converting fructose-6P into glucosamine-6P using glutamine as a nitrogen source. In Bacillus anthracis, this protein is Glutamine--fructose-6-phosphate aminotransferase [isomerizing].